Consider the following 72-residue polypeptide: Translation initiation factor IF-1 (72 aa).

An S1-like domain is found at 1-72 (MAKEGAIEVE…TRGRIVYRYK (72 aa)).

The protein belongs to the IF-1 family. In terms of assembly, component of the 30S ribosomal translation pre-initiation complex which assembles on the 30S ribosome in the order IF-2 and IF-3, IF-1 and N-formylmethionyl-tRNA(fMet); mRNA recruitment can occur at any time during PIC assembly.

Its subcellular location is the cytoplasm. In terms of biological role, one of the essential components for the initiation of protein synthesis. Stabilizes the binding of IF-2 and IF-3 on the 30S subunit to which N-formylmethionyl-tRNA(fMet) subsequently binds. Helps modulate mRNA selection, yielding the 30S pre-initiation complex (PIC). Upon addition of the 50S ribosomal subunit IF-1, IF-2 and IF-3 are released leaving the mature 70S translation initiation complex. The polypeptide is Translation initiation factor IF-1 (Corynebacterium efficiens (strain DSM 44549 / YS-314 / AJ 12310 / JCM 11189 / NBRC 100395)).